A 487-amino-acid chain; its full sequence is Cysteine--tRNA ligase (487 aa).

Cys-27 contacts Zn(2+). Residues Val-29 to His-39 carry the 'HIGH' region motif. Residues Cys-211, His-236, and Glu-240 each contribute to the Zn(2+) site. The 'KMSKS' region motif lies at Lys-268–Ser-272. Residue Lys-271 coordinates ATP.

It belongs to the class-I aminoacyl-tRNA synthetase family. In terms of assembly, monomer. The cofactor is Zn(2+).

The protein localises to the cytoplasm. It carries out the reaction tRNA(Cys) + L-cysteine + ATP = L-cysteinyl-tRNA(Cys) + AMP + diphosphate. This chain is Cysteine--tRNA ligase, found in Thermodesulfovibrio yellowstonii (strain ATCC 51303 / DSM 11347 / YP87).